We begin with the raw amino-acid sequence, 136 residues long: Ribosome-binding factor A (136 aa).

Belongs to the RbfA family. Monomer. Binds 30S ribosomal subunits, but not 50S ribosomal subunits or 70S ribosomes.

The protein localises to the cytoplasm. In terms of biological role, one of several proteins that assist in the late maturation steps of the functional core of the 30S ribosomal subunit. Associates with free 30S ribosomal subunits (but not with 30S subunits that are part of 70S ribosomes or polysomes). Required for efficient processing of 16S rRNA. May interact with the 5'-terminal helix region of 16S rRNA. The chain is Ribosome-binding factor A from Yersinia enterocolitica serotype O:8 / biotype 1B (strain NCTC 13174 / 8081).